A 184-amino-acid polypeptide reads, in one-letter code: MKNITDPFPCLGYWPSAGSFGFNTDILATNPINLSIVIGVLIFFGKGVLSDLLDNRKQRILRTIRNSEELREGAIEQLEKAQARLKKVETEADRFRVNGYSEIEREKLNLINSIYTTLEQLENYKNETIHFEQQRAINQVRQRVLQQALQGALGTLNSCLNNELHFRTIAANIGMFGAMKEKNN.

The chain crosses the membrane as a helical span at residues 27–49; that stretch reads LATNPINLSIVIGVLIFFGKGVL.

It belongs to the ATPase B chain family. In terms of assembly, F-type ATPases have 2 components, F(1) - the catalytic core - and F(0) - the membrane proton channel. F(1) has five subunits: alpha(3), beta(3), gamma(1), delta(1), epsilon(1). F(0) has four main subunits: a(1), b(1), b'(1) and c(10-14). The alpha and beta chains form an alternating ring which encloses part of the gamma chain. F(1) is attached to F(0) by a central stalk formed by the gamma and epsilon chains, while a peripheral stalk is formed by the delta, b and b' chains.

Its subcellular location is the plastid. It localises to the chloroplast thylakoid membrane. Its function is as follows. F(1)F(0) ATP synthase produces ATP from ADP in the presence of a proton or sodium gradient. F-type ATPases consist of two structural domains, F(1) containing the extramembraneous catalytic core and F(0) containing the membrane proton channel, linked together by a central stalk and a peripheral stalk. During catalysis, ATP synthesis in the catalytic domain of F(1) is coupled via a rotary mechanism of the central stalk subunits to proton translocation. Component of the F(0) channel, it forms part of the peripheral stalk, linking F(1) to F(0). The chain is ATP synthase subunit b, chloroplastic from Lotus japonicus (Lotus corniculatus var. japonicus).